Reading from the N-terminus, the 1086-residue chain is Receptor-type guanylate cyclase gcy-6 (1086 aa).

The signal sequence occupies residues 1–21 (MIGVYLRSVIFPLLFVIQTIC). The Extracellular segment spans residues 22–487 (QPPGNVFHLG…PANVFFQYIG (466 aa)). Asn-325, Asn-343, Asn-387, and Asn-427 each carry an N-linked (GlcNAc...) asparagine glycan. A helical membrane pass occupies residues 488 to 508 (WFIAAIIIIFFTIMGAILAFI). Over 509–1086 (YLCHAKQQEV…APKILKKKQD (578 aa)) the chain is Cytoplasmic. The region spanning 560 to 836 (SSTLSEVGET…NDNLMDHVFN (277 aa)) is the Protein kinase domain. ATP-binding positions include 566 to 574 (VGETRNYLF) and Lys-589. In terms of domain architecture, Guanylate cyclase spans 894–1024 (TLFFSDVVSF…DAVNTASRME (131 aa)).

The protein belongs to the adenylyl cyclase class-4/guanylyl cyclase family. In terms of tissue distribution, expressed in both ASEL and ASER neurons throughout late embryonic and early larval stages. In adults, expressed asymmetrically in ASE left (ASEL) sensory neuron.

The protein resides in the cell membrane. It carries out the reaction GTP = 3',5'-cyclic GMP + diphosphate. Guanylate cyclase involved in the production of the second messenger cGMP. Regulates chemotaxis responses toward the salt ion Mg(2+) and to a lesser extent toward Cl(1-) in ASE left (ASEL) sensory neuron. In Caenorhabditis elegans, this protein is Receptor-type guanylate cyclase gcy-6.